Consider the following 545-residue polypeptide: MAELTINADDVRNALNEFAASYEPGNAERVEVGRVTTASDGIARVEGLPSVMANELLRFEDGTLGLAQNLDVREIGVIILGDFTGIEEGQEVHRTGEILSVPVGDQFLGRVVDPLGVPIDGLGEIQAETTRALELQAPGVTQRQSVKEPMQTGLKAIDAMIPIGRGQRQLIIGDRKTGKTAIAVDTILNQQANWASGDVKKQVRCIYVAIGQKASTIAEVRQTLEDNGALEYTTIVASPASDPAGFKYLAPYAGSAIGQHWMYSGKHVLIIFDDLSKQAEAYRAVSLLLRRPPGREAYPGDVFYLHSRLLERCAKLSDELGAGSMTGLPIIETKANDVGAFIPTNVVSITDGQIFLQSDLFNANQRPAVDVGISVSRVGGSAQVKSMKTVSGTLKLDLAQYRDMQAFAMFASDLDAASRQQLTRGSRLMELLKQPQYTPYPVEDQVVSIWAGTHGYLDEVPVEDILRFEREFLEHLRHSTEILTTLAQTNKLEDSTVEALKTSIVDFKKGFFGDGANHLVGAGHEEFDSLSEADVDQEKIVKQKR.

Residue 173 to 180 (GDRKTGKT) participates in ATP binding.

It belongs to the ATPase alpha/beta chains family. In terms of assembly, F-type ATPases have 2 components, CF(1) - the catalytic core - and CF(0) - the membrane proton channel. CF(1) has five subunits: alpha(3), beta(3), gamma(1), delta(1), epsilon(1). CF(0) has three main subunits: a(1), b(2) and c(9-12). The alpha and beta chains form an alternating ring which encloses part of the gamma chain. CF(1) is attached to CF(0) by a central stalk formed by the gamma and epsilon chains, while a peripheral stalk is formed by the delta and b chains.

The protein resides in the cell membrane. The enzyme catalyses ATP + H2O + 4 H(+)(in) = ADP + phosphate + 5 H(+)(out). Functionally, produces ATP from ADP in the presence of a proton gradient across the membrane. The alpha chain is a regulatory subunit. This chain is ATP synthase subunit alpha, found in Renibacterium salmoninarum (strain ATCC 33209 / DSM 20767 / JCM 11484 / NBRC 15589 / NCIMB 2235).